We begin with the raw amino-acid sequence, 417 residues long: Serine hydroxymethyltransferase (417 aa).

(6S)-5,6,7,8-tetrahydrofolate-binding positions include leucine 122 and 126-128 (GHL). Lysine 230 carries the N6-(pyridoxal phosphate)lysine modification. 355–357 (SPF) contributes to the (6S)-5,6,7,8-tetrahydrofolate binding site.

Belongs to the SHMT family. In terms of assembly, homodimer. The cofactor is pyridoxal 5'-phosphate.

It localises to the cytoplasm. It carries out the reaction (6R)-5,10-methylene-5,6,7,8-tetrahydrofolate + glycine + H2O = (6S)-5,6,7,8-tetrahydrofolate + L-serine. It participates in one-carbon metabolism; tetrahydrofolate interconversion. It functions in the pathway amino-acid biosynthesis; glycine biosynthesis; glycine from L-serine: step 1/1. In terms of biological role, catalyzes the reversible interconversion of serine and glycine with tetrahydrofolate (THF) serving as the one-carbon carrier. This reaction serves as the major source of one-carbon groups required for the biosynthesis of purines, thymidylate, methionine, and other important biomolecules. Also exhibits THF-independent aldolase activity toward beta-hydroxyamino acids, producing glycine and aldehydes, via a retro-aldol mechanism. The chain is Serine hydroxymethyltransferase from Francisella tularensis subsp. tularensis (strain FSC 198).